We begin with the raw amino-acid sequence, 255 residues long: Pimeloyl-[acyl-carrier protein] methyl ester esterase (255 aa).

Positions 16 to 242 (LVLLHGWGLN…AAHAPFISHP (227 aa)) constitute an AB hydrolase-1 domain. Substrate contacts are provided by residues W22, 82-83 (SL), and 143-147 (FLALQ). The active-site Nucleophile is the S82. Active-site residues include D207 and H235. H235 contacts substrate.

It belongs to the AB hydrolase superfamily. Carboxylesterase BioH family. As to quaternary structure, monomer.

It is found in the cytoplasm. It catalyses the reaction 6-carboxyhexanoyl-[ACP] methyl ester + H2O = 6-carboxyhexanoyl-[ACP] + methanol + H(+). It participates in cofactor biosynthesis; biotin biosynthesis. Its function is as follows. The physiological role of BioH is to remove the methyl group introduced by BioC when the pimeloyl moiety is complete. It allows to synthesize pimeloyl-ACP via the fatty acid synthetic pathway through the hydrolysis of the ester bonds of pimeloyl-ACP esters. This chain is Pimeloyl-[acyl-carrier protein] methyl ester esterase, found in Pectobacterium atrosepticum (strain SCRI 1043 / ATCC BAA-672) (Erwinia carotovora subsp. atroseptica).